Consider the following 350-residue polypeptide: Dihydroorotate dehydrogenase (quinone) (350 aa).

FMN contacts are provided by residues 67–71 (AGFDK) and Gly-91. Substrate is bound at residue Lys-71. 116 to 120 (NRMGL) lines the substrate pocket. Positions 144 and 177 each coordinate FMN. Substrate is bound at residue Asn-177. The Nucleophile role is filled by Cys-180. A substrate-binding site is contributed by Asn-182. Residues Lys-213 and Thr-241 each contribute to the FMN site. 242–243 (NT) lines the substrate pocket. The interval 245-265 (TERPASLRSPNAVETGGLSGK) is disordered. Residues Gly-264, Gly-291, and 312 to 313 (YT) contribute to the FMN site.

This sequence belongs to the dihydroorotate dehydrogenase family. Type 2 subfamily. As to quaternary structure, monomer. It depends on FMN as a cofactor.

Its subcellular location is the cell membrane. It catalyses the reaction (S)-dihydroorotate + a quinone = orotate + a quinol. The protein operates within pyrimidine metabolism; UMP biosynthesis via de novo pathway; orotate from (S)-dihydroorotate (quinone route): step 1/1. Catalyzes the conversion of dihydroorotate to orotate with quinone as electron acceptor. The polypeptide is Dihydroorotate dehydrogenase (quinone) (pyrD) (Haloarcula marismortui (strain ATCC 43049 / DSM 3752 / JCM 8966 / VKM B-1809) (Halobacterium marismortui)).